An 80-amino-acid polypeptide reads, in one-letter code: MPPRWASLLLLACSLLLLAVPPGTAGPSQPTYPGDDAPVEDLIRFYNDLQQYLNVVTRHRYGRRSSSRVLCEEPMGAAGC.

The N-terminal stretch at 1-25 (MPPRWASLLLLACSLLLLAVPPGTA) is a signal peptide. Tyrosine amide is present on Y61. A propeptide spanning residues 65–80 (SSSRVLCEEPMGAAGC) is cleaved from the precursor.

Belongs to the NPY family.

The protein resides in the secreted. Hormone secreted by pancreatic cells that acts as a regulator of pancreatic and gastrointestinal functions. The polypeptide is Pancreatic polypeptide (PPY) (Gallus gallus (Chicken)).